Here is a 147-residue protein sequence, read N- to C-terminus: Large ribosomal subunit protein uL15 (147 aa).

The segment covering 1–20 (MTMHLNDLKPADGARTERTR) has biased composition (basic and acidic residues). A disordered region spans residues 1-64 (MTMHLNDLKP…GGQTPMQRRL (64 aa)). Residues 23-33 (RGIGSGLGKTC) are compositionally biased toward gly residues. The span at 34–47 (GRGHKGSFARKGGG) shows a compositional bias: basic residues.

It belongs to the universal ribosomal protein uL15 family. As to quaternary structure, part of the 50S ribosomal subunit.

Binds to the 23S rRNA. This chain is Large ribosomal subunit protein uL15, found in Xanthomonas campestris pv. campestris (strain 8004).